Reading from the N-terminus, the 118-residue chain is Ig heavy chain V region AC38 205.12 (118 aa).

Residues 1–98 (EVQLQQSGPE…EDSAVYYCAR (98 aa)) form a v segment region. C22 and C96 are disulfide-bonded. The segment at 99–104 (GYGYDP) is d segment. The tract at residues 105-118 (FDVWGTGTTVTVSS) is j segment.

The protein is Ig heavy chain V region AC38 205.12 of Mus musculus (Mouse).